Reading from the N-terminus, the 166-residue chain is CDP-archaeol synthase (166 aa).

A run of 5 helical transmembrane segments spans residues 1 to 21 (MPII…LVAN), 55 to 75 (LLVA…FLGI), 78 to 98 (IYVS…GAFI), 110 to 130 (AIGL…IISK), and 131 to 151 (ISLN…LHIL).

Belongs to the CDP-archaeol synthase family. Mg(2+) serves as cofactor.

The protein resides in the cell membrane. It carries out the reaction 2,3-bis-O-(geranylgeranyl)-sn-glycerol 1-phosphate + CTP + H(+) = CDP-2,3-bis-O-(geranylgeranyl)-sn-glycerol + diphosphate. Its pathway is membrane lipid metabolism; glycerophospholipid metabolism. In terms of biological role, catalyzes the formation of CDP-2,3-bis-(O-geranylgeranyl)-sn-glycerol (CDP-archaeol) from 2,3-bis-(O-geranylgeranyl)-sn-glycerol 1-phosphate (DGGGP) and CTP. This reaction is the third ether-bond-formation step in the biosynthesis of archaeal membrane lipids. This Sulfurisphaera tokodaii (strain DSM 16993 / JCM 10545 / NBRC 100140 / 7) (Sulfolobus tokodaii) protein is CDP-archaeol synthase.